Consider the following 304-residue polypeptide: Protease HtpX homolog 1 (304 aa).

Helical transmembrane passes span 17–37 (VTLF…IALL) and 39–59 (SWVL…WFSD). Zn(2+) is bound at residue His140. Residue Glu141 is part of the active site. His144 lines the Zn(2+) pocket. The next 2 helical transmembrane spans lie at 151 to 171 (AVIT…RFAF) and 186 to 206 (AVLA…FLLI). Glu214 contributes to the Zn(2+) binding site.

Belongs to the peptidase M48B family. Requires Zn(2+) as cofactor.

It is found in the cell membrane. The polypeptide is Protease HtpX homolog 1 (Streptomyces coelicolor (strain ATCC BAA-471 / A3(2) / M145)).